The chain runs to 455 residues: Argininosuccinate lyase (455 aa).

The protein belongs to the lyase 1 family. Argininosuccinate lyase subfamily.

The protein resides in the cytoplasm. It catalyses the reaction 2-(N(omega)-L-arginino)succinate = fumarate + L-arginine. The protein operates within amino-acid biosynthesis; L-arginine biosynthesis; L-arginine from L-ornithine and carbamoyl phosphate: step 3/3. The polypeptide is Argininosuccinate lyase (Shewanella baltica (strain OS223)).